We begin with the raw amino-acid sequence, 805 residues long: Leucine--tRNA ligase (805 aa).

Residues 40 to 51 (PYPSGSGLHVGH) carry the 'HIGH' region motif. Residues 576-580 (KMSKS) carry the 'KMSKS' region motif. Residue Lys579 participates in ATP binding.

The protein belongs to the class-I aminoacyl-tRNA synthetase family.

It is found in the cytoplasm. It carries out the reaction tRNA(Leu) + L-leucine + ATP = L-leucyl-tRNA(Leu) + AMP + diphosphate. The polypeptide is Leucine--tRNA ligase (Chlorobium limicola (strain DSM 245 / NBRC 103803 / 6330)).